Consider the following 664-residue polypeptide: Methionine--tRNA ligase (664 aa).

The 'HIGH' region signature appears at 15-25; the sequence is YYPSGKAHIGH. The 'KMSKS' region signature appears at 310–314; sequence KMSKS. ATP is bound at residue K313. Residues 563–664 form the tRNA-binding domain; the sequence is DFDKIDLRVA…SALPNGAKVK (102 aa).

Belongs to the class-I aminoacyl-tRNA synthetase family. MetG type 2B subfamily. In terms of assembly, homodimer.

Its subcellular location is the cytoplasm. It catalyses the reaction tRNA(Met) + L-methionine + ATP = L-methionyl-tRNA(Met) + AMP + diphosphate. Functionally, is required not only for elongation of protein synthesis but also for the initiation of all mRNA translation through initiator tRNA(fMet) aminoacylation. The protein is Methionine--tRNA ligase (metG) of Listeria innocua serovar 6a (strain ATCC BAA-680 / CLIP 11262).